A 71-amino-acid polypeptide reads, in one-letter code: Small ribosomal subunit protein eS17 (71 aa).

This sequence belongs to the eukaryotic ribosomal protein eS17 family.

This is Small ribosomal subunit protein eS17 from Pyrobaculum islandicum (strain DSM 4184 / JCM 9189 / GEO3).